We begin with the raw amino-acid sequence, 1979 residues long: E3 ubiquitin-protein ligase TTC3 (1979 aa).

The interval 1–230 is interaction with POLG; it reads MDDFAEGGLS…RHSCMQCVKQ (230 aa). 2 TPR repeats span residues 231–264 and 266–298; these read GELM…RPEN and LLYG…KNTW. Phosphoserine is present on S378. The interval 422–457 is disordered; that stretch reads CDCHPEFLPPPSQPPRHKGKQKSRNNESEKPSFNSE. TPR repeat units lie at residues 536–572 and 576–609; these read VLVV…YPNE and CLAY…ISRL. The segment at 783–811 is disordered; it reads LAQERMEEDLRESNPPKNEEPEETSDSAQ. S1009 carries the post-translational modification Phosphoserine. Disordered regions lie at residues 1021–1067, 1214–1289, 1402–1427, 1574–1601, 1757–1776, 1788–1821, and 1873–1927; these read NKGK…GPFA, QPDV…EEAK, QGSA…SSDS, KNDG…DEKT, MDSA…GSPT, KGAS…KKPS, and DEQK…PAPD. Residues 1036–1050 are compositionally biased toward low complexity; the sequence is VGSGAASVAPSSEAV. Residue S1060 is modified to Phosphoserine. Positions 1214–1227 are enriched in basic and acidic residues; that stretch reads QPDVKSEALSEDVK. Low complexity predominate over residues 1248-1257; the sequence is DSDSSSGSAS. Basic and acidic residues predominate over residues 1576 to 1586; it reads DGFDKECEPHP. 2 stretches are compositionally biased toward polar residues: residues 1788–1799 and 1808–1821; these read KGASQVSPSEQS and GQAT…KKPS. Phosphoserine is present on S1794. Residues 1873 to 1890 show a composition bias toward basic and acidic residues; that stretch reads DEQKKKKPNPGKDKKTSE. The segment at 1931-1971 adopts an RING-type; atypical zinc-finger fold; it reads CEICHEIFKSKNMRVLKCGHKFHKGCFKQWLKGQSTCPTCG.

As to quaternary structure, interacts (when phosphorylated on Ser-378) with AKT1, AKT2 and AKT3 (when phosphorylated). Interacts with CIT. Interacts with POLG. Interacts with HSP70. Interacts with SMURF2. Phosphorylation on Ser-378 by Akt is required for ubiquitin ligase activity. In terms of processing, proteolytically cleaved into differently sized N- and C-terminal fragments.

It is found in the nucleus. It localises to the cytoplasm. The protein localises to the golgi apparatus. The enzyme catalyses S-ubiquitinyl-[E2 ubiquitin-conjugating enzyme]-L-cysteine + [acceptor protein]-L-lysine = [E2 ubiquitin-conjugating enzyme]-L-cysteine + N(6)-ubiquitinyl-[acceptor protein]-L-lysine.. Its pathway is protein modification; protein ubiquitination. Functionally, E3 ubiquitin-protein ligase which catalyzes the formation of 'Lys-48'-polyubiquitin chains. Mediates the ubiquitination and subsequent degradation of phosphorylated Akt (AKT1, AKT2 and AKT3) in the nucleus. Acts as a terminal regulator of Akt signaling after activation; its phosphorylation by Akt, which is a prerequisite for ubiquitin ligase activity, suggests the existence of a regulation mechanism required to control Akt levels after activation. Positively regulates TGFB1-induced epithelial-mesenchymal transition and myofibroblast differentiation by mediating the ubiquitination and subsequent degradation of SMURF2. Regulates neuronal differentiation by regulating actin remodeling and Golgi organization via a signaling cascade involving RHOA, CIT and ROCK. Inhibits cell proliferation. This is E3 ubiquitin-protein ligase TTC3 (Ttc3) from Mus musculus (Mouse).